A 61-amino-acid chain; its full sequence is MDPNCSCPTGGSCSCAGSCTCKACRCTSCKKSCCSCCPAGCARCAQGCICKGASDKCSCCA.

The residue at position 1 (methionine 1) is an N-acetylmethionine. A beta region spans residues 1 to 29 (MDPNCSCPTGGSCSCAGSCTCKACRCTSC). The a divalent metal cation site is built by cysteine 5, cysteine 7, cysteine 13, cysteine 15, cysteine 19, cysteine 21, cysteine 24, cysteine 26, cysteine 29, cysteine 33, cysteine 34, cysteine 36, cysteine 37, cysteine 41, cysteine 44, cysteine 48, cysteine 50, and cysteine 57. An alpha region spans residues 30–61 (KKSCCSCCPAGCARCAQGCICKGASDKCSCCA). Phosphoserine is present on serine 58. Residues cysteine 59 and cysteine 60 each contribute to the a divalent metal cation site.

This sequence belongs to the metallothionein superfamily. Type 1 family. Monomer.

Metallothioneins have a high content of cysteine residues that bind various heavy metals; these proteins are transcriptionally regulated by both heavy metals and glucocorticoids. The protein is Metallothionein-1A (MT1A) of Sus scrofa (Pig).